The following is a 123-amino-acid chain: Small ribosomal subunit protein uS13 (123 aa).

A disordered region spans residues 89–123; that stretch reads GRRHRSGLPVRGQRTRTNARTRKGKRKAVAKKKAK. A compositionally biased stretch (basic residues) spans 101–123; that stretch reads QRTRTNARTRKGKRKAVAKKKAK.

The protein belongs to the universal ribosomal protein uS13 family. Part of the 30S ribosomal subunit. Forms a loose heterodimer with protein S19. Forms two bridges to the 50S subunit in the 70S ribosome.

Functionally, located at the top of the head of the 30S subunit, it contacts several helices of the 16S rRNA. In the 70S ribosome it contacts the 23S rRNA (bridge B1a) and protein L5 of the 50S subunit (bridge B1b), connecting the 2 subunits; these bridges are implicated in subunit movement. Contacts the tRNAs in the A and P-sites. The polypeptide is Small ribosomal subunit protein uS13 (Cutibacterium acnes (strain DSM 16379 / KPA171202) (Propionibacterium acnes)).